An 80-amino-acid polypeptide reads, in one-letter code: Cell division activator CedA (80 aa).

This sequence belongs to the CedA family.

Its function is as follows. Activates the cell division inhibited by chromosomal DNA over-replication. This is Cell division activator CedA from Salmonella typhimurium (strain LT2 / SGSC1412 / ATCC 700720).